Reading from the N-terminus, the 238-residue chain is Sugar fermentation stimulation protein homolog (238 aa).

Belongs to the SfsA family.

The protein is Sugar fermentation stimulation protein homolog of Brucella melitensis biotype 1 (strain ATCC 23456 / CCUG 17765 / NCTC 10094 / 16M).